Here is a 395-residue protein sequence, read N- to C-terminus: E3 ubiquitin-protein ligase NHLRC1 (395 aa).

The RING-type zinc finger occupies 26 to 72 (CKVCFEKFGHRQQRRPRNLSCGHVVCLACVAALAHPRTLALECPFCR). 6 NHL repeats span residues 113 to 157 (ALTC…FDSG), 161 to 204 (AHQF…FDFF), 205 to 245 (GQIK…LDVD), 248 to 300 (EGVL…FSSS), 301 to 349 (MQLV…LGKP), and 350 to 393 (EEFP…YKVD).

Interacts with AGL. Interacts (via the NHL repeats) with EPM2A/laforin. Forms a complex with EPM2A/laforin and HSP70. Interacts with PRDM8. As to expression, expressed in brain, cerebellum, spinal cord, medulla, heart, liver, skeletal muscle and pancreas.

Its subcellular location is the endoplasmic reticulum. The protein localises to the nucleus. It catalyses the reaction S-ubiquitinyl-[E2 ubiquitin-conjugating enzyme]-L-cysteine + [acceptor protein]-L-lysine = [E2 ubiquitin-conjugating enzyme]-L-cysteine + N(6)-ubiquitinyl-[acceptor protein]-L-lysine.. It participates in protein modification; protein ubiquitination. E3 ubiquitin-protein ligase. Together with the phosphatase EPM2A/laforin, appears to be involved in the clearance of toxic polyglucosan and protein aggregates via multiple pathways. In complex with EPM2A/laforin and HSP70, suppresses the cellular toxicity of misfolded proteins by promoting their degradation through the ubiquitin-proteasome system (UPS). Ubiquitinates the glycogen-targeting protein phosphatase subunits PPP1R3C/PTG and PPP1R3D in a laforin-dependent manner and targets them for proteasome-dependent degradation, thus decreasing glycogen accumulation. Polyubiquitinates EPM2A/laforin and ubiquitinates AGL and targets them for proteasome-dependent degradation. Also promotes proteasome-independent protein degradation through the macroautophagy pathway. The protein is E3 ubiquitin-protein ligase NHLRC1 (NHLRC1) of Homo sapiens (Human).